The primary structure comprises 387 residues: Zinc finger transcription factor YY1 (387 aa).

5 consecutive C2H2-type zinc fingers follow at residues 79-103, 108-132, 138-162, 168-193, and 230-255; these read FLCSYDGCGKTFFDVSALRKHSHIH, YVCDQEGCGKKFLDSSKLKRHYLIH, YICTYEGCGKAFSLDFNLRSHMKTH, HICPYSGCVKRYAHEYKLKNHVAAYH, and YACPYEGCEKAYIHEYKLKLHLKREH. Residues 201–290 form an MED18-binding region; the sequence is TPKYTPPAEK…DDGSDQDVYR (90 aa). The disordered stretch occupies residues 258–387; the sequence is HLQEENADTP…DDDEETEYED (130 aa). Phosphoserine is present on serine 284. Over residues 291-305 the composition is skewed to basic residues; the sequence is KHASNGKGQTHKQQS. Residues 319 to 326 carry the Nuclear localization signal motif; sequence GKKGSTSS. A coiled-coil region spans residues 339-367; the sequence is AKETFEEVEREEEEDSEETEEDRDNVEDG. Acidic residues-rich tracts occupy residues 344–363 and 373–387; these read EEVEREEEEDSEETEEDRDN and NNEDDDDDEETEYED.

Interacts with MED18 to suppress disease susceptibility via the repression of genes glutaredoxins GRX480, GRXS13 and thioredoxin TRX-h5. In terms of tissue distribution, mostly expressed in flowers, to a lower extent in seedlings, stems and leaves, and, at low levels, in roots and senescent leaves.

The protein resides in the nucleus. Its function is as follows. Dual-function transcription factor with both repression and activation activities. Binds to 5'-CCATATT-3' motif in target gene promoters (e.g. ABR1). Also binds to G-rich DNA motif 5'-GGGGGCAGTGG-3'. Regulates the expression of genes involved in diverse cellular pathways, including glucose metabolism, photosynthesis, phototropism and stress response (e.g. salt, drought and osmotic stress). Regulates plant immunity, especially during necrotrophic fungal infection (e.g. B.cinerea). Binds to ABR1 promoter and promotes its expression, thus negatively regulating the abscisic acid (ABA) signaling pathway. Represses ABA- and salt-responsive genes expression. This is Zinc finger transcription factor YY1 from Arabidopsis thaliana (Mouse-ear cress).